Consider the following 671-residue polypeptide: DEAD-box ATP-dependent RNA helicase 7 (671 aa).

Positions 1 to 84 are disordered; it reads MPSLMLSDKK…EKKKSSKKVK (84 aa). The span at 26-41 shows a compositional bias: basic and acidic residues; the sequence is LDSKKGKKEQKLKLSD. Ser-40 and Ser-42 each carry phosphoserine. Over residues 50 to 60 the composition is skewed to basic residues; the sequence is KKSKKKDKKRK. Residues 96–124 carry the Q motif motif; the sequence is NAVSKFRISAPLREKLKANGIEALFPIQA. The 183-residue stretch at 127-309 folds into the Helicase ATP-binding domain; it reads FDMVLDGADL…NRFLKRDQKT (183 aa). 140-147 contributes to the ATP binding site; sequence ARTGQGKT. The short motif at 255 to 258 is the DEAD box element; sequence DEAD. Residues 339 to 479 enclose the Helicase C-terminal domain; sequence LIPDIISCYS…HLAAPQPDEI (141 aa). Residues 627–671 form a disordered region; the sequence is EREPLPQKRFGGGGRGNRFGGGGGNRFGGGGGRGRGGSGGRGQRY. The span at 636 to 671 shows a compositional bias: gly residues; sequence FGGGGRGNRFGGGGGNRFGGGGGRGRGGSGGRGQRY.

This sequence belongs to the DEAD box helicase family. DDX21/DDX50 subfamily.

Its subcellular location is the nucleus. The enzyme catalyses ATP + H2O = ADP + phosphate + H(+). This Arabidopsis thaliana (Mouse-ear cress) protein is DEAD-box ATP-dependent RNA helicase 7 (RH7).